A 209-amino-acid chain; its full sequence is Octanoyltransferase (209 aa).

One can recognise a BPL/LPL catalytic domain in the interval 29 to 209 (GSGDELVWML…KKSFVKIFGE (181 aa)). Residues 68 to 75 (RGGKYTYH), 141 to 143 (AIG), and 154 to 156 (GIA) each bind substrate. Catalysis depends on Cys172, which acts as the Acyl-thioester intermediate.

Belongs to the LipB family.

Its subcellular location is the cytoplasm. The catalysed reaction is octanoyl-[ACP] + L-lysyl-[protein] = N(6)-octanoyl-L-lysyl-[protein] + holo-[ACP] + H(+). It participates in protein modification; protein lipoylation via endogenous pathway; protein N(6)-(lipoyl)lysine from octanoyl-[acyl-carrier-protein]: step 1/2. In terms of biological role, catalyzes the transfer of endogenously produced octanoic acid from octanoyl-acyl-carrier-protein onto the lipoyl domains of lipoate-dependent enzymes. Lipoyl-ACP can also act as a substrate although octanoyl-ACP is likely to be the physiological substrate. The protein is Octanoyltransferase of Neorickettsia sennetsu (strain ATCC VR-367 / Miyayama) (Ehrlichia sennetsu).